The sequence spans 782 residues: Endonuclease MutS2 (782 aa).

336 to 343 provides a ligand contact to ATP; it reads GPNTGGKT. One can recognise a Smr domain in the interval 707–782; that stretch reads LDLRGYRYED…GFGVTVATLK (76 aa).

It belongs to the DNA mismatch repair MutS family. MutS2 subfamily. As to quaternary structure, homodimer. Binds to stalled ribosomes, contacting rRNA.

In terms of biological role, endonuclease that is involved in the suppression of homologous recombination and thus may have a key role in the control of bacterial genetic diversity. Acts as a ribosome collision sensor, splitting the ribosome into its 2 subunits. Detects stalled/collided 70S ribosomes which it binds and splits by an ATP-hydrolysis driven conformational change. Acts upstream of the ribosome quality control system (RQC), a ribosome-associated complex that mediates the extraction of incompletely synthesized nascent chains from stalled ribosomes and their subsequent degradation. Probably generates substrates for RQC. The chain is Endonuclease MutS2 from Staphylococcus aureus (strain MSSA476).